Consider the following 238-residue polypeptide: Leucyl/phenylalanyl-tRNA--protein transferase (238 aa).

It belongs to the L/F-transferase family.

It localises to the cytoplasm. The catalysed reaction is N-terminal L-lysyl-[protein] + L-leucyl-tRNA(Leu) = N-terminal L-leucyl-L-lysyl-[protein] + tRNA(Leu) + H(+). It carries out the reaction N-terminal L-arginyl-[protein] + L-leucyl-tRNA(Leu) = N-terminal L-leucyl-L-arginyl-[protein] + tRNA(Leu) + H(+). The enzyme catalyses L-phenylalanyl-tRNA(Phe) + an N-terminal L-alpha-aminoacyl-[protein] = an N-terminal L-phenylalanyl-L-alpha-aminoacyl-[protein] + tRNA(Phe). In terms of biological role, functions in the N-end rule pathway of protein degradation where it conjugates Leu, Phe and, less efficiently, Met from aminoacyl-tRNAs to the N-termini of proteins containing an N-terminal arginine or lysine. This chain is Leucyl/phenylalanyl-tRNA--protein transferase, found in Psychromonas ingrahamii (strain DSM 17664 / CCUG 51855 / 37).